Reading from the N-terminus, the 538-residue chain is uncharacterized protein (538 aa).

The N-terminal stretch at 1–17 (MSFSATILFSPPSGSEA) is a signal peptide. Residues 101-131 (RQGKVSIPDEDGESRAHSSPPEEPGPLKESP) form a disordered region. Glycyl lysine isopeptide (Lys-Gly) (interchain with G-Cter in SUMO2) cross-links involve residues lysine 128 and lysine 221. Serine 224 is subject to Phosphoserine. Positions 233-253 (RATPETGPENGTKLPPPRPED) are disordered. Phosphoserine occurs at positions 285 and 428. The interval 488-523 (LPPELYNPNFQEEEDEGGDENAPGSPSFDQPHKTCC) is disordered.

It is found in the secreted. This is an uncharacterized protein from Homo sapiens (Human).